The chain runs to 348 residues: Alcohol dehydrogenase 2 (348 aa).

The residue at position 2 (serine 2) is an N-acetylserine. The Zn(2+) site is built by cysteine 44, histidine 67, cysteine 98, cysteine 101, cysteine 104, cysteine 112, and cysteine 154. NAD(+) contacts are provided by residues 178–184 (GAAGGLG), aspartate 202, lysine 207, 269–271 (VGL), and arginine 341.

This sequence belongs to the zinc-containing alcohol dehydrogenase family. As to quaternary structure, homotetramer. Requires Zn(2+) as cofactor.

Its subcellular location is the cytoplasm. The catalysed reaction is a primary alcohol + NAD(+) = an aldehyde + NADH + H(+). The enzyme catalyses a secondary alcohol + NAD(+) = a ketone + NADH + H(+). The chain is Alcohol dehydrogenase 2 (ADH2) from Kluyveromyces marxianus (Yeast).